The sequence spans 447 residues: tRNA-2-methylthio-N(6)-dimethylallyladenosine synthase (447 aa).

The 119-residue stretch at 8–126 (KKVVTLAYGC…FQRLLEEAEE (119 aa)) folds into the MTTase N-terminal domain. Residues cysteine 17, cysteine 53, cysteine 87, cysteine 162, cysteine 166, and cysteine 169 each contribute to the [4Fe-4S] cluster site. The region spanning 148–378 (AKGKLKAYVN…ITVQNAQSLA (231 aa)) is the Radical SAM core domain. Residues 381 to 444 (QEMIGKTCEV…SWTLFGECRA (64 aa)) form the TRAM domain.

This sequence belongs to the methylthiotransferase family. MiaB subfamily. As to quaternary structure, monomer. Requires [4Fe-4S] cluster as cofactor.

It is found in the cytoplasm. The enzyme catalyses N(6)-dimethylallyladenosine(37) in tRNA + (sulfur carrier)-SH + AH2 + 2 S-adenosyl-L-methionine = 2-methylsulfanyl-N(6)-dimethylallyladenosine(37) in tRNA + (sulfur carrier)-H + 5'-deoxyadenosine + L-methionine + A + S-adenosyl-L-homocysteine + 2 H(+). In terms of biological role, catalyzes the methylthiolation of N6-(dimethylallyl)adenosine (i(6)A), leading to the formation of 2-methylthio-N6-(dimethylallyl)adenosine (ms(2)i(6)A) at position 37 in tRNAs that read codons beginning with uridine. This Desulfitobacterium hafniense (strain Y51) protein is tRNA-2-methylthio-N(6)-dimethylallyladenosine synthase.